The chain runs to 140 residues: Acyl carrier protein 1, chloroplastic (140 aa).

The transit peptide at 1–56 directs the protein to the chloroplast; that stretch reads MASAAAGASICIKSASFSPLAPGRISSLRSVSLPVSRKSFPSLKSSKSSFALRVSC. Residues 60–135 enclose the Carrier domain; the sequence is PETVAKVCGI…DAADLIEKLM (76 aa). Ser95 is subject to O-(pantetheine 4'-phosphoryl)serine.

This sequence belongs to the acyl carrier protein (ACP) family. In terms of processing, 4'-phosphopantetheine is transferred from CoA to a specific serine of apo-ACP by acpS. This modification is essential for activity because fatty acids are bound in thioester linkage to the sulfhydryl of the prosthetic group.

The protein localises to the plastid. It localises to the chloroplast. Its pathway is lipid metabolism; fatty acid biosynthesis. Its function is as follows. Carrier of the growing fatty acid chain in fatty acid biosynthesis. In Cuphea lanceolata (Cigar flower), this protein is Acyl carrier protein 1, chloroplastic (ACL1.1).